A 473-amino-acid chain; its full sequence is FAD-dependent monooxygenase ctvC (473 aa).

FAD-binding residues include E37, A51, and R110. The helical transmembrane segment at I218 to L238 threads the bilayer. 2 residues coordinate FAD: D310 and A323. N-linked (GlcNAc...) asparagine glycosylation is present at N358. A helical membrane pass occupies residues L451–N471.

The protein belongs to the paxM FAD-dependent monooxygenase family. Requires FAD as cofactor.

The protein resides in the membrane. The protein operates within mycotoxin biosynthesis. FAD-dependent monooxygenase; part of the gene cluster that mediates the biosynthesis of citreoviridin, an inhibitor of the of F1-ATPase beta-subunit. The HR-PKS ctvA accepts acetyl-CoA as the starter unit and catalyzes eight iterations of malonyl-CoA extension and four iterations of SAM-dependent methylation at C4, C12, C14, and C16. The KR and DH domains selectively act on the first six iterations to generate the hexaene chain. In the last three iterations, the KR and DH domains terminate their functions to yield a beta,delta-diketo ester moiety, which then undergoes intramolecular cyclization to yield an alpha-pyrone intermediate. Subsequently, ctvB methylates the alpha-pyrone hydroxyl group to generate citreomontanin. In order to form the tetrahydrofuran ring with the correct stereochemistry, the terminal alkenes of citreomontanin need to undergo isomerization to yield a (17Z)-hexaene, a step that could be catalyzed by ctvC. The (17Z)-hexaene then undergoes bisepoxidation by ctvC to form a (17R,16R,15S,14R)-bisepoxide moiety. Lastly, ctvD acts as a regioselective hydrolase to form the tetrahydrofuran ring with the substituents in the correct absolute configuration, completing the biosynthesis of citreoviridin. The polypeptide is FAD-dependent monooxygenase ctvC (Aspergillus terreus (strain NIH 2624 / FGSC A1156)).